We begin with the raw amino-acid sequence, 599 residues long: Microtubule-associated protein 70-2 (599 aa).

The interval methionine 1–leucine 30 is disordered. The stretch at aspartate 43 to lysine 349 forms a coiled coil. A required for targeting to microtubules region spans residues isoleucine 227–valine 460. Disordered stretches follow at residues leucine 357–leucine 453 and alanine 557–glutamine 599. A compositionally biased stretch (low complexity) spans arginine 404 to serine 420. Residues leucine 533–arginine 570 adopt a coiled-coil conformation. Residues alanine 557–alanine 568 are compositionally biased toward basic and acidic residues.

This sequence belongs to the MAP70 family.

It is found in the cytoplasm. It localises to the cytoskeleton. Functionally, plant-specific protein that interact with microtubules. This Oryza sativa subsp. japonica (Rice) protein is Microtubule-associated protein 70-2 (MAP70.2).